The sequence spans 161 residues: Nucleotide-binding protein xcc-b100_3818 (161 aa).

The protein belongs to the YajQ family.

Its function is as follows. Nucleotide-binding protein. The chain is Nucleotide-binding protein xcc-b100_3818 from Xanthomonas campestris pv. campestris (strain B100).